We begin with the raw amino-acid sequence, 525 residues long: GMP synthase [glutamine-hydrolyzing] (525 aa).

A Glutamine amidotransferase type-1 domain is found at 9–207 (RILILDFGSQ…VLGICGCEAL (199 aa)). Cys86 acts as the Nucleophile in catalysis. Active-site residues include His181 and Glu183. Residues 208 to 400 (WTSATIIEDA…LGLPYDMLYR (193 aa)) form the GMPS ATP-PPase domain. Residue 235–241 (SGGVDSS) coordinates ATP.

As to quaternary structure, homodimer.

The catalysed reaction is XMP + L-glutamine + ATP + H2O = GMP + L-glutamate + AMP + diphosphate + 2 H(+). It functions in the pathway purine metabolism; GMP biosynthesis; GMP from XMP (L-Gln route): step 1/1. Functionally, catalyzes the synthesis of GMP from XMP. The protein is GMP synthase [glutamine-hydrolyzing] of Yersinia pestis bv. Antiqua (strain Antiqua).